The following is a 166-amino-acid chain: Thiol peroxidase (166 aa).

Residues 18–164 (VKVGDKAPNF…YEKAIEAAKA (147 aa)) enclose the Thioredoxin domain. Catalysis depends on Cys60, which acts as the Cysteine sulfenic acid (-SOH) intermediate. The cysteines at positions 60 and 94 are disulfide-linked.

Belongs to the peroxiredoxin family. Tpx subfamily. Homodimer.

The enzyme catalyses a hydroperoxide + [thioredoxin]-dithiol = an alcohol + [thioredoxin]-disulfide + H2O. Thiol-specific peroxidase that catalyzes the reduction of hydrogen peroxide and organic hydroperoxides to water and alcohols, respectively. Plays a role in cell protection against oxidative stress by detoxifying peroxides. The protein is Thiol peroxidase of Halalkalibacterium halodurans (strain ATCC BAA-125 / DSM 18197 / FERM 7344 / JCM 9153 / C-125) (Bacillus halodurans).